The sequence spans 134 residues: ATP synthase epsilon chain (134 aa).

The segment at N100 to V134 is disordered. The segment covering E110 to R120 has biased composition (basic and acidic residues).

This sequence belongs to the ATPase epsilon chain family. F-type ATPases have 2 components, CF(1) - the catalytic core - and CF(0) - the membrane proton channel. CF(1) has five subunits: alpha(3), beta(3), gamma(1), delta(1), epsilon(1). CF(0) has three main subunits: a, b and c.

It is found in the cell inner membrane. Functionally, produces ATP from ADP in the presence of a proton gradient across the membrane. This Sulfurihydrogenibium sp. (strain YO3AOP1) protein is ATP synthase epsilon chain.